The following is a 443-amino-acid chain: Glutamate-1-semialdehyde 2,1-aminomutase (443 aa).

The residue at position 272 (K272) is an N6-(pyridoxal phosphate)lysine.

Belongs to the class-III pyridoxal-phosphate-dependent aminotransferase family. HemL subfamily. As to quaternary structure, homodimer. Requires pyridoxal 5'-phosphate as cofactor.

The protein localises to the cytoplasm. The enzyme catalyses (S)-4-amino-5-oxopentanoate = 5-aminolevulinate. It participates in porphyrin-containing compound metabolism; protoporphyrin-IX biosynthesis; 5-aminolevulinate from L-glutamyl-tRNA(Glu): step 2/2. Its pathway is porphyrin-containing compound metabolism; chlorophyll biosynthesis. This is Glutamate-1-semialdehyde 2,1-aminomutase from Chloroflexus aurantiacus (strain ATCC 29366 / DSM 635 / J-10-fl).